The chain runs to 78 residues: UPF0335 protein RPR_04100 (78 aa).

It belongs to the UPF0335 family.

This chain is UPF0335 protein RPR_04100, found in Rickettsia peacockii (strain Rustic).